The chain runs to 324 residues: Glucosyl-3-phosphoglycerate synthase (324 aa).

UDP-alpha-D-glucose-binding positions include 50–54, S81, K114, and 134–135; these read PALNE and DS. D136 lines the Mn(2+) pocket. (2R)-3-phosphoglycerate is bound at residue 184 to 187; the sequence is GRVT. UDP-alpha-D-glucose is bound by residues 229–232 and 256–261; these read YGVE and RAHRNR. H258 is a binding site for Mn(2+). Residue N260 coordinates (2R)-3-phosphoglycerate.

Belongs to the glycosyltransferase 2 family. In terms of assembly, homotrimer. It depends on Mg(2+) as a cofactor. Mn(2+) serves as cofactor.

It carries out the reaction an NDP-alpha-D-glucose + (2R)-3-phosphoglycerate = (2R)-2-O-(alpha-D-glucopyranosyl)-3-phospho-glycerate + a ribonucleoside 5'-diphosphate + H(+). The enzyme catalyses (2R)-3-phosphoglycerate + UDP-alpha-D-glucose = (2R)-2-O-(alpha-D-glucopyranosyl)-3-phospho-glycerate + UDP + H(+). The catalysed reaction is ADP-alpha-D-glucose + (2R)-3-phosphoglycerate = (2R)-2-O-(alpha-D-glucopyranosyl)-3-phospho-glycerate + ADP + H(+). It catalyses the reaction GDP-D-glucose + (2R)-3-phosphoglycerate = (2R)-2-O-(alpha-D-glucopyranosyl)-3-phospho-glycerate + GDP + H(+). In terms of biological role, involved in the biosynthesis of 6-O-methylglucose lipopolysaccarides (MGLPs). Catalyzes the transfer of the glucose moiety from a nuleotide sugar such as UDP-alpha-D-glucose to the position 2 of 3-phospho-D-glycerate (3-PGA) to form glucosyl-3-phosphoglycerate (GPG). It can use UDP-glucose, ADP-glucose and GDP-glucose as sugar donor substrates with decreasing affinity and with 3-PGA as an acceptor. D-glycerate can only be an acceptor with ADP-glucose and at a very low rate. The sequence is that of Glucosyl-3-phosphoglycerate synthase (gpgS) from Mycobacterium bovis (strain ATCC BAA-935 / AF2122/97).